The chain runs to 359 residues: Short chain dehydrogenase resG (359 aa).

Residues lysine 87, aspartate 110, asparagine 137, tyrosine 237, and lysine 241 each coordinate NADP(+). Catalysis depends on tyrosine 237, which acts as the Proton donor. Lysine 241 acts as the Lowers pKa of active site Tyr in catalysis.

It belongs to the short-chain dehydrogenases/reductases (SDR) family.

It participates in antifungal biosynthesis. Its function is as follows. Short chain dehydrogenase; part of the gene cluster that mediates the biosynthesis of the tetrahydropyranyl antifungal agent restricticin that acts as an inhibitor of CYP51 and blocks the ergosterol biosynthesis. The highly reducing polyketide synthase resH, the short chain dehydrogenase resG, the cyclase resF, the FAD-dependent monooxygenase resA and the enoylreductase resD are required to generate the first stable intermediate desmethylrestrictinol. ResH with resD biosynthesize the first polyketide chain intermediate that is reduced by resG, followed by epoxidation by resA before 6-endo cyclization via epoxide opening by resF leads to desmethylrestrictinol. The methyltransferase resE then catalyzes the C4 O-methylation of desmethylrestrictinol to produce restrictinol, and the nonribosomal peptide synthetase resC catalyzes the C3 esterification of restrictinol with glycine that leads to restricticin. In Aspergillus sclerotiorum, this protein is Short chain dehydrogenase resG.